The sequence spans 465 residues: Chromosomal replication initiator protein DnaA (465 aa).

Residues 1 to 84 (MSLSLWQQCL…RFEVGSKPLV (84 aa)) are domain I, interacts with DnaA modulators. The tract at residues 84 to 128 (VQTISQPAQSHHNPVSVARQQPVRMAPVRPSWDNSPVQAEHTYRS) is domain II. The domain III, AAA+ region stretch occupies residues 129–345 (NVNPKHTFDN…GALNRVIANA (217 aa)). 4 residues coordinate ATP: Gly-173, Gly-175, Lys-176, and Thr-177. The segment at 346 to 465 (NFTGRSITID…FSNLIRTLSS (120 aa)) is domain IV, binds dsDNA.

This sequence belongs to the DnaA family. Oligomerizes as a right-handed, spiral filament on DNA at oriC.

It is found in the cytoplasm. Plays an essential role in the initiation and regulation of chromosomal replication. ATP-DnaA binds to the origin of replication (oriC) to initiate formation of the DNA replication initiation complex once per cell cycle. Binds the DnaA box (a 9 base pair repeat at the origin) and separates the double-stranded (ds)DNA. Forms a right-handed helical filament on oriC DNA; dsDNA binds to the exterior of the filament while single-stranded (ss)DNA is stabiized in the filament's interior. The ATP-DnaA-oriC complex binds and stabilizes one strand of the AT-rich DNA unwinding element (DUE), permitting loading of DNA polymerase. After initiation quickly degrades to an ADP-DnaA complex that is not apt for DNA replication. Binds acidic phospholipids. This Pectobacterium atrosepticum (strain SCRI 1043 / ATCC BAA-672) (Erwinia carotovora subsp. atroseptica) protein is Chromosomal replication initiator protein DnaA.